The chain runs to 415 residues: Autophagy-related protein 19 (415 aa).

An ATG11-binding region spans residues 21-28 (YDECNKFQ). Residues 126–135 (CREDAHEDPV) are compositionally biased toward basic and acidic residues. Positions 126–150 (CREDAHEDPVSPKAGSEEEISPNST) are disordered. 2 positions are modified to phosphoserine: serine 136 and serine 141. Residues 157 to 187 (RECLDNFMKQLLKLEESLNKLELEQKVTNKE) adopt a coiled-coil conformation. Glycyl lysine isopeptide (Lys-Gly) (interchain with G-Cter in ubiquitin) cross-links involve residues lysine 213 and lysine 216. At serine 243 the chain carries Phosphoserine. Residues 254–367 (VEPPNERSLQ…LRPPSRLSAE (114 aa)) are AMS1-binding. The segment at 406-415 (NEKALTWEEL) is ATG8-binding. Residues 412-415 (WEEL) carry the WXXL motif.

In terms of assembly, interacts with the vacuolar aminopeptidase 1 (LAP4) precursor and mature forms. Also interacts with AMS1, APE4, ATG8 ATG11, and UBP3. Polyubiquitinated at Lys-213 and Lys-216. Deubiquitination by UBP3 is required for full activity of ATG19.

Its subcellular location is the preautophagosomal structure membrane. In terms of biological role, cargo-receptor protein involved in the cytoplasm to vacuole transport (Cvt) and in autophagy. Recognizes cargo proteins, such as APE4, LAP3, LAP4 and AMS1 and delivers them to the pre-autophagosomal structure for eventual engulfment by the autophagosome and targeting to the vacuole. Involved in the organization of the preautophagosomal structure (PAS). ATG19 association with cargo protein is required to localize ATG11 to the PAS. Also involved in endoplasmic reticulum-specific autophagic process, in selective removal of ER-associated degradation (ERAD) substrates, and is essential for the survival of cells subjected to severe ER stress. Also plays a role in regulation of filamentous growth. The sequence is that of Autophagy-related protein 19 (ATG19) from Saccharomyces cerevisiae (strain YJM789) (Baker's yeast).